The following is a 274-amino-acid chain: 4-hydroxy-tetrahydrodipicolinate reductase (274 aa).

Residues 11-16 (GGSGRM) and Glu37 each bind NAD(+). NADP(+) is bound at residue Arg38. NAD(+) contacts are provided by residues 101 to 103 (GTT) and 125 to 128 (APNM). His158 (proton donor/acceptor) is an active-site residue. A (S)-2,3,4,5-tetrahydrodipicolinate-binding site is contributed by His159. Lys162 serves as the catalytic Proton donor. 168–169 (GT) provides a ligand contact to (S)-2,3,4,5-tetrahydrodipicolinate.

It belongs to the DapB family.

The protein resides in the cytoplasm. The enzyme catalyses (S)-2,3,4,5-tetrahydrodipicolinate + NAD(+) + H2O = (2S,4S)-4-hydroxy-2,3,4,5-tetrahydrodipicolinate + NADH + H(+). The catalysed reaction is (S)-2,3,4,5-tetrahydrodipicolinate + NADP(+) + H2O = (2S,4S)-4-hydroxy-2,3,4,5-tetrahydrodipicolinate + NADPH + H(+). Its pathway is amino-acid biosynthesis; L-lysine biosynthesis via DAP pathway; (S)-tetrahydrodipicolinate from L-aspartate: step 4/4. Catalyzes the conversion of 4-hydroxy-tetrahydrodipicolinate (HTPA) to tetrahydrodipicolinate. The protein is 4-hydroxy-tetrahydrodipicolinate reductase of Shewanella pealeana (strain ATCC 700345 / ANG-SQ1).